Reading from the N-terminus, the 234-residue chain is MQTPLESTDVKLDTLNEPSAHLIEKNVALPKDIFRSYLSYWIYEIARYTPVMILSLVIGVLVLLIIFFNDNEACVFNSAYYAYLSLVVLLIILGDGNPKLVSRRNFRTELLVDVITRKPAVEGKEWRIITYNMNQYLFNHGQWHTPYYFYSDEDCYRYFLRLVEGVTPKKQTATSIGNSPVTAKPEDAIESASPSSRLNYRNFLLKAAEIERQAQENYWRRRHPNIDALLKKTE.

Residues 1-47 (MQTPLESTDVKLDTLNEPSAHLIEKNVALPKDIFRSYLSYWIYEIAR) lie on the Cytoplasmic side of the membrane. A Phosphothreonine modification is found at threonine 3. Residues 48–68 (YTPVMILSLVIGVLVLLIIFF) form a helical membrane-spanning segment. Over 69–72 (NDNE) the chain is Extracellular. Residues 73–93 (ACVFNSAYYAYLSLVVLLIIL) form a helical membrane-spanning segment. At 94–234 (GDGNPKLVSR…NIDALLKKTE (141 aa)) the chain is on the cytoplasmic side. Residues 231–234 (KKTE) are COPI binding.

It belongs to the DUP/COS family. In terms of assembly, interacts with MST28. Binds to coatomer proteins of COPI and SEC23/SEC24 of COPII coated vesicles.

It is found in the endoplasmic reticulum. The protein localises to the golgi apparatus. Its subcellular location is the cytoplasmic vesicle. It localises to the COPI-coated vesicle membrane. The protein resides in the COPII-coated vesicle membrane. Functionally, involved in protein trafficking vesicle formation, probably by stabilizing of coatomer at the Golgi membrane and thus allowing the efficient formation of COPI coated vesicles. The polypeptide is Multicopy suppressor of SEC21 protein 27 (MST27) (Saccharomyces cerevisiae (strain ATCC 204508 / S288c) (Baker's yeast)).